The sequence spans 834 residues: Copper-exporting P-type ATPase (834 aa).

2 consecutive HMA domains span residues 3-64 (QTID…YDAS) and 99-162 (DSQQ…YGAE). Residues C14, C17, C110, and C113 each contribute to the Cu(+) site. A run of 6 helical transmembrane segments spans residues 187–207 (WQAI…MIGD), 218–238 (LWLV…GHFY), 254–274 (TLVA…NLWP), 284–304 (LYYE…MLEA), 438–458 (AVFV…WYFF), and 464–484 (IVYT…CALG). D523 (4-aspartylphosphate intermediate) is an active-site residue. Positions 720 and 724 each coordinate Mg(2+). The next 2 helical transmembrane spans lie at 779–799 (LGAF…LWPF) and 801–821 (GTLL…ITVV).

Belongs to the cation transport ATPase (P-type) (TC 3.A.3) family. Type IB subfamily.

Its subcellular location is the cell inner membrane. It is found in the cytoplasm. The enzyme catalyses Cu(+)(in) + ATP + H2O = Cu(+)(out) + ADP + phosphate + H(+). In terms of biological role, involved in Cu(+) export. Probably also encodes a cytoplasmic copper chaperone CopA(Z) that is produced by programmed ribosomal frameshifting. This is Copper-exporting P-type ATPase (copA) from Escherichia coli O157:H7.